The primary structure comprises 700 residues: Putative proline-rich receptor-like protein kinase PERK6 (700 aa).

The disordered stretch occupies residues 1–180 (MAEGQSPENS…SGGGSNSSGN (180 aa)). At 1-186 (MAEGQSPENS…SSGNNEPNTA (186 aa)) the chain is on the extracellular side. 2 stretches are compositionally biased toward pro residues: residues 9-19 (NSPPSPTPPSP) and 29-47 (SPPP…PPPD). Low complexity predominate over residues 48–137 (DSSNGSPQPP…GNNNDNNNQN (90 aa)). N176 carries an N-linked (GlcNAc...) asparagine glycan. Residues 187 to 207 (AIVGIVAGAGLLFLVMILFCV) form a helical membrane-spanning segment. Residues 208–700 (CCCRKKKKKH…NNKTTPSRDH (493 aa)) lie on the Cytoplasmic side of the membrane. The tract at residues 249 to 315 (NLSQQYPGSN…GPSVPPPHPS (67 aa)) is disordered. Low complexity predominate over residues 255–265 (PGSNGNNNWMN). The span at 266–286 (SPPPPPPGSWQPSPPPPPPPV) shows a compositional bias: pro residues. Phosphothreonine is present on T326. Residues 337 to 615 (FSQSRLLGQG…VRALEGDATL (279 aa)) form the Protein kinase domain. ATP contacts are provided by residues 343–351 (LGQGGFGYV) and K365. Y410 is subject to Phosphotyrosine. Residue D461 is the Proton acceptor of the active site. S465 and S494 each carry phosphoserine. T495 and T500 each carry phosphothreonine. Phosphotyrosine is present on Y508. Disordered regions lie at residues 616-642 (DDLS…DSST) and 659-700 (EYGA…SRDH). The segment covering 689–700 (ANNNKTTPSRDH) has biased composition (polar residues).

It belongs to the protein kinase superfamily. Ser/Thr protein kinase family. Mostly expressed in flower buds.

Its subcellular location is the cell membrane. The enzyme catalyses L-seryl-[protein] + ATP = O-phospho-L-seryl-[protein] + ADP + H(+). It carries out the reaction L-threonyl-[protein] + ATP = O-phospho-L-threonyl-[protein] + ADP + H(+). The sequence is that of Putative proline-rich receptor-like protein kinase PERK6 (PERK6) from Arabidopsis thaliana (Mouse-ear cress).